Here is a 250-residue protein sequence, read N- to C-terminus: Manganese transport system ATP-binding protein MntB (250 aa).

Residues 4–236 (VELDNVTVAY…NLQKTYGGRL (233 aa)) form the ABC transporter domain. Residue 36 to 43 (GPNGAGKS) coordinates ATP.

Belongs to the ABC transporter superfamily. As to quaternary structure, the complex is probably composed of two ATP-binding proteins (MntB), two transmembrane proteins (MntC and MntD) and a solute-binding protein (MntA).

The protein resides in the cell membrane. In terms of biological role, probably part of the ABC transporter complex MntABCD involved in manganese import. Probably responsible for energy coupling to the transport system. The sequence is that of Manganese transport system ATP-binding protein MntB from Bacillus subtilis (strain 168).